Here is a 61-residue protein sequence, read N- to C-terminus: Bacteriocin mesentericin Y105 (61 aa).

The N-terminal stretch at 1–24 is a signal peptide; that stretch reads MTNMKSVEAYQQLDNQNLKKVVGG. Cysteines 33 and 38 form a disulfide.

Belongs to the bacteriocin class IIA/YGNGV family.

The protein resides in the secreted. In terms of biological role, bacteriocin active against Listeria monocytogenes. The polypeptide is Bacteriocin mesentericin Y105 (mesY) (Leuconostoc mesenteroides).